We begin with the raw amino-acid sequence, 480 residues long: Glycogen synthase (480 aa).

K15 serves as a coordination point for ADP-alpha-D-glucose.

The protein belongs to the glycosyltransferase 1 family. Bacterial/plant glycogen synthase subfamily.

The catalysed reaction is [(1-&gt;4)-alpha-D-glucosyl](n) + ADP-alpha-D-glucose = [(1-&gt;4)-alpha-D-glucosyl](n+1) + ADP + H(+). Its pathway is glycan biosynthesis; glycogen biosynthesis. Its function is as follows. Synthesizes alpha-1,4-glucan chains using ADP-glucose. The chain is Glycogen synthase from Desulforamulus reducens (strain ATCC BAA-1160 / DSM 100696 / MI-1) (Desulfotomaculum reducens).